Here is a 148-residue protein sequence, read N- to C-terminus: SsrA-binding protein (148 aa).

The interval 119 to 148 (AKGKKQHDKRQSMKEADWKREKQRLIKHTR) is disordered. A compositionally biased stretch (basic and acidic residues) spans 127–142 (KRQSMKEADWKREKQR).

Belongs to the SmpB family.

It localises to the cytoplasm. Required for rescue of stalled ribosomes mediated by trans-translation. Binds to transfer-messenger RNA (tmRNA), required for stable association of tmRNA with ribosomes. tmRNA and SmpB together mimic tRNA shape, replacing the anticodon stem-loop with SmpB. tmRNA is encoded by the ssrA gene; the 2 termini fold to resemble tRNA(Ala) and it encodes a 'tag peptide', a short internal open reading frame. During trans-translation Ala-aminoacylated tmRNA acts like a tRNA, entering the A-site of stalled ribosomes, displacing the stalled mRNA. The ribosome then switches to translate the ORF on the tmRNA; the nascent peptide is terminated with the 'tag peptide' encoded by the tmRNA and targeted for degradation. The ribosome is freed to recommence translation, which seems to be the essential function of trans-translation. In Neisseria gonorrhoeae (strain ATCC 700825 / FA 1090), this protein is SsrA-binding protein.